The primary structure comprises 444 residues: Protein phosphatase 2C homolog C10F6.17c (444 aa).

The region spanning 85–439 (RYDFNQVASN…DDITVTVIFF (355 aa)) is the PPM-type phosphatase domain. Residues Asp121, Gly122, and Asp344 each contribute to the Mn(2+) site.

The protein belongs to the PP2C family. Requires Mg(2+) as cofactor. Mn(2+) is required as a cofactor.

The protein localises to the mitochondrion. The enzyme catalyses O-phospho-L-seryl-[protein] + H2O = L-seryl-[protein] + phosphate. It catalyses the reaction O-phospho-L-threonyl-[protein] + H2O = L-threonyl-[protein] + phosphate. Involved in regulation of pyruvate dehydrogenase activity. This chain is Protein phosphatase 2C homolog C10F6.17c, found in Schizosaccharomyces pombe (strain 972 / ATCC 24843) (Fission yeast).